Reading from the N-terminus, the 494-residue chain is Cytochrome P450 2G1 (494 aa).

Residue Cys439 participates in heme binding.

Belongs to the cytochrome P450 family. Requires heme as cofactor. In terms of tissue distribution, olfactory epithelium.

The protein resides in the endoplasmic reticulum membrane. Its subcellular location is the microsome membrane. It catalyses the reaction an organic molecule + reduced [NADPH--hemoprotein reductase] + O2 = an alcohol + oxidized [NADPH--hemoprotein reductase] + H2O + H(+). Cytochromes P450 are a group of heme-thiolate monooxygenases. This isozyme seems to be implicated in olfaction. The protein is Cytochrome P450 2G1 (CYP2G1) of Oryctolagus cuniculus (Rabbit).